A 1687-amino-acid polypeptide reads, in one-letter code: MDVNSRLSVQSNVESPLMHEGPEPQQITSSAAGNLAGSITACKKVLRSNSLLESTDYWLQNQRTPCQIGFVEDESENCASVCFVNLDVNKDACITENLQQKLVNVSPDLPNLISSMNVQQPKENEIVLLSGLASGNPQADFDVSQCPWLPDICLVQCARGNRPNSTNCIIFEINKFLIGLEVVQERQLHLETNVLKLEDDTNCSLSSIEEDFLTASEHLEEEIEVDDCRSGLENTNVSANVLESKKPKETTQEGWDYHKEKLHCALGEKHIRKHRTPSTKTEGSKENTEENTSLKSLNRLVRPSHLKSEVAGNKQLATNYSYPENIKGELETSQMLFIPRDAYLSMVKKDVLSPCSVLSEQGGSHRDHDVTPNPLPPVQNGEASTGEYATNLAESVMQDAFIRLSQSQPTLPQESAVSFSMRSALLPSGCCTKDMVVPRSWNELPKIVIVQSPDGSDTVPEPNVSSWPDMEFVETSGIFSADSSSRPTQSALEVALACAATVIGTISSPQATERFAMEQESLVSTYAQRGTGVQQTQVPQAFMAPSTTEYSFPSALCGMTQVASAVAVCGLCEKEEATCPVAPTDLLPTSGASEEISSIGSLVMERSTELGKEAIAEALLREATLILARPDAYSSLGELLESVNQRIIETTSKTQTLCTESVQRNELAHTLSNVILKHSVDELHQKTTMAHPTDERHPCGTLDTLMESVNQLLHNVICFTFKKMNHIVTLSEHPSFDQAAGQAWVKAFACPSSQPLSNAHGTGLVIRNLVEDASPKSNKGGARPELVNNPRLQSEFSCSHRMFDSTAKSFPKEIYLKGIMGEDTRNPHHTLNYDSNERRASTDLGKLTTASEGCSGFQETEDSIVPNTQEKYICATPLNNEAQVNLSLLGDDLSVPAQSTLEAKQSEVYGITDFAEELAETVVSMATEIAAICLDNSNGKQPWFCAWKRGNEFLTAPNGSCRSLKRKKENSSAGSTVRKHKPPRLSEIKRKADEHPELKEKLMNRVMDESMNLEDIPDSVSTFANEVAAKIMNLTEFSMVDGVWQGQSCSRTRLLGGDRWNRLKASSCESIPEEDSEARVFVNSLGLMSTLSQPVSRASSVSKQSSCESITDEFSRFMVKQMENEGRGFELLLDYYAGKNASSIMSSAMQQACQKNDHLNVRPSCPSKQSSTESITEEFYRYMLRDIAKESKDGASSRRSSHDWTTGLLSPSTRSPLCYRQSSMPDSRSPCSRLTVNAPVKANSLDGFAQNCPQDSVNVQPVSRASSSGLCKSDSCLYRRSGTDQITNMLIHETWASSIEALMRKNKIIADDSEAANASPGPVSSGSPLQVEKNANRLATSKGHRGPTLLVQESVDYQRKDAVTEGNHSPVSSPGKTAPVKKPSDFDPRRETSACHNAAGLNSPRRSLCSRDVPLIQIETDQKEECIGEPGPFLSQSGSLEETEGHQPEETIPDVARNEDTAPSTCQSSRDSLETSGEVEVEVLKEDIPRDESRNPPSSSEESTGSWSQLANEEDIPDDTSSFLQLSERSMSNGNSSGTSSLGIMDLDIYQESIPSSPMINELVEEKEILKEQSESIKEHASGLPGRAASPQRSLLVINFDLEPECPDAELRATLQWIAASELGIPTIYFKKSQESRIEKFLDVVKLVQQKSWKVGDIFHAVVQYCKLHAEQKERTPSLFDWLLELG.

Positions 1-14 (MDVNSRLSVQSNVE) are enriched in polar residues. Disordered stretches follow at residues 1 to 25 (MDVNSRLSVQSNVESPLMHEGPEPQ) and 272 to 293 (RKHRTPSTKTEGSKENTEENTS). Residues 914 to 931 (FAEELAETVVSMATEIAA) form a PKA-RII subunit binding domain region. The tract at residues 964–989 (LKRKKENSSAGSTVRKHKPPRLSEIK) is disordered. Residues Ser1010, Ser1070, Ser1092, Ser1105, Ser1106, Ser1109, Ser1244, and Ser1273 each carry the phosphoserine modification. Disordered stretches follow at residues 1363–1406 (VTEG…SPRR) and 1421–1520 (DQKE…PDDT). Over residues 1366-1375 (GNHSPVSSPG) the composition is skewed to polar residues. Residues 1382–1393 (KPSDFDPRRETS) are compositionally biased toward basic and acidic residues. The segment covering 1461–1470 (TAPSTCQSSR) has biased composition (polar residues). The span at 1482-1494 (EVLKEDIPRDESR) shows a compositional bias: basic and acidic residues. The span at 1495–1508 (NPPSSSEESTGSWS) shows a compositional bias: low complexity.

The protein belongs to the AKAP110 family. As to quaternary structure, interacts (via the PKA-RII subunit binding domain) with the RI subunit of PKA. Interacts with SPHK1; the interaction greatly reduces SPHK1 activity.

Its subcellular location is the cytoplasm. Its function is as follows. Anchoring protein that binds preferentially to the type I regulatory subunit of c-AMP-dependent protein kinase (PKA type I) and targets it to distinct subcellular compartments. May act as a converging factor linking cAMP and sphingosine signaling pathways. Plays a regulatory role in the modulation of SPHK1. The chain is A-kinase anchor protein SPHKAP (Sphkap) from Mus musculus (Mouse).